The sequence spans 416 residues: Glutamyl-tRNA reductase (416 aa).

Substrate is bound by residues 51-54 (TCNR), Ser-110, 115-117 (EPQ), and Gln-121. Cys-52 serves as the catalytic Nucleophile. 190 to 195 (GAGQTG) is a binding site for NADP(+).

It belongs to the glutamyl-tRNA reductase family. Homodimer.

It catalyses the reaction (S)-4-amino-5-oxopentanoate + tRNA(Glu) + NADP(+) = L-glutamyl-tRNA(Glu) + NADPH + H(+). Its pathway is porphyrin-containing compound metabolism; protoporphyrin-IX biosynthesis; 5-aminolevulinate from L-glutamyl-tRNA(Glu): step 1/2. Functionally, catalyzes the NADPH-dependent reduction of glutamyl-tRNA(Glu) to glutamate 1-semialdehyde (GSA). In Francisella tularensis subsp. holarctica (strain OSU18), this protein is Glutamyl-tRNA reductase.